The following is a 206-amino-acid chain: uncharacterized protein (206 aa).

A disordered region spans residues 147-206 (REEKAQKSKSKSRNQDERGSPLDERLGPKVSDLTLMERIFQVRRKPRKSRRDRRSRVSKR). Residues 159–173 (RNQDERGSPLDERLG) show a composition bias toward basic and acidic residues. Over residues 187 to 206 (QVRRKPRKSRRDRRSRVSKR) the composition is skewed to basic residues.

This is an uncharacterized protein from Schizosaccharomyces pombe (strain 972 / ATCC 24843) (Fission yeast).